A 400-amino-acid chain; its full sequence is MKQKVIYSAPDEFGHFGTFGGKFIPETLVKNAADLEEEYLKAKNDPEFHQTLDNLLRHYVGRPTPLYHASRLSEKQGGAQIWLKREDLCHTGAHKINNALGQVLLAKRMGKKRIIAETGAGQHGVATATVCALFGLDCIVYMGEEDIRRQAPNVARMKLLGTEVRPVTAGSRTLKDATSEAIRDWMNNPEETFYIVGSVIGMHPYPMMVRDFQSVIGRETRQQVLDQAGRLPDVIVACVGGGSNAIGMFYEFLPDAKEVELIGVEAAGEGLEGKHAASLTKGEIGVLHGSMMKLLQDEYGQVQEAHSISAGLDYPGVGPEHCYLQKLGLVCYTSTTDKEALAALDALAKTEGIICALESAHAVHYAMKRAAEMPKESIIVVNLSGRGDKDMGTIMQELKL.

An N6-(pyridoxal phosphate)lysine modification is found at Lys-95.

It belongs to the TrpB family. Tetramer of two alpha and two beta chains. Pyridoxal 5'-phosphate serves as cofactor.

It catalyses the reaction (1S,2R)-1-C-(indol-3-yl)glycerol 3-phosphate + L-serine = D-glyceraldehyde 3-phosphate + L-tryptophan + H2O. It functions in the pathway amino-acid biosynthesis; L-tryptophan biosynthesis; L-tryptophan from chorismate: step 5/5. Its function is as follows. The beta subunit is responsible for the synthesis of L-tryptophan from indole and L-serine. This Chlorobaculum tepidum (strain ATCC 49652 / DSM 12025 / NBRC 103806 / TLS) (Chlorobium tepidum) protein is Tryptophan synthase beta chain.